A 189-amino-acid chain; its full sequence is dCTP deaminase (189 aa).

DCTP is bound by residues 112-117 (KSTYAR), 136-138 (TLE), Gln-157, Tyr-171, and Gln-181. Glu-138 (proton donor/acceptor) is an active-site residue.

This sequence belongs to the dCTP deaminase family. Homotrimer.

It carries out the reaction dCTP + H2O + H(+) = dUTP + NH4(+). Its pathway is pyrimidine metabolism; dUMP biosynthesis; dUMP from dCTP (dUTP route): step 1/2. Functionally, catalyzes the deamination of dCTP to dUTP. The sequence is that of dCTP deaminase from Methylacidiphilum infernorum (isolate V4) (Methylokorus infernorum (strain V4)).